The chain runs to 355 residues: UDP-N-acetylglucosamine--N-acetylmuramyl-(pentapeptide) pyrophosphoryl-undecaprenol N-acetylglucosamine transferase (355 aa).

Residues Thr-15–Gly-17, Asn-127, Arg-163, Ser-191, Ile-244, Ala-263–Glu-268, and Gln-288 contribute to the UDP-N-acetyl-alpha-D-glucosamine site.

Belongs to the glycosyltransferase 28 family. MurG subfamily.

It localises to the cell inner membrane. The catalysed reaction is di-trans,octa-cis-undecaprenyl diphospho-N-acetyl-alpha-D-muramoyl-L-alanyl-D-glutamyl-meso-2,6-diaminopimeloyl-D-alanyl-D-alanine + UDP-N-acetyl-alpha-D-glucosamine = di-trans,octa-cis-undecaprenyl diphospho-[N-acetyl-alpha-D-glucosaminyl-(1-&gt;4)]-N-acetyl-alpha-D-muramoyl-L-alanyl-D-glutamyl-meso-2,6-diaminopimeloyl-D-alanyl-D-alanine + UDP + H(+). The protein operates within cell wall biogenesis; peptidoglycan biosynthesis. In terms of biological role, cell wall formation. Catalyzes the transfer of a GlcNAc subunit on undecaprenyl-pyrophosphoryl-MurNAc-pentapeptide (lipid intermediate I) to form undecaprenyl-pyrophosphoryl-MurNAc-(pentapeptide)GlcNAc (lipid intermediate II). The protein is UDP-N-acetylglucosamine--N-acetylmuramyl-(pentapeptide) pyrophosphoryl-undecaprenol N-acetylglucosamine transferase of Salmonella newport (strain SL254).